The following is a 177-amino-acid chain: MAEFATIARPYAKALFGLAQEKSQIESWLGGLEKLAAVVQEGKVASLIDRPETNASEKADILIDLVGLKDKELKNFVIVLAGQKRLSILPEVYAQYQDLTLSFNHIKSAVIYSAYPLTDKQVGELAQMLNKRFDSELKISVEIEPELIGGIKVEVGDQVLDLSVRGKLSALYTTMTN.

The protein belongs to the ATPase delta chain family. F-type ATPases have 2 components, F(1) - the catalytic core - and F(0) - the membrane proton channel. F(1) has five subunits: alpha(3), beta(3), gamma(1), delta(1), epsilon(1). F(0) has three main subunits: a(1), b(2) and c(10-14). The alpha and beta chains form an alternating ring which encloses part of the gamma chain. F(1) is attached to F(0) by a central stalk formed by the gamma and epsilon chains, while a peripheral stalk is formed by the delta and b chains.

It is found in the cell inner membrane. Functionally, f(1)F(0) ATP synthase produces ATP from ADP in the presence of a proton or sodium gradient. F-type ATPases consist of two structural domains, F(1) containing the extramembraneous catalytic core and F(0) containing the membrane proton channel, linked together by a central stalk and a peripheral stalk. During catalysis, ATP synthesis in the catalytic domain of F(1) is coupled via a rotary mechanism of the central stalk subunits to proton translocation. This protein is part of the stalk that links CF(0) to CF(1). It either transmits conformational changes from CF(0) to CF(1) or is implicated in proton conduction. In Neisseria meningitidis serogroup C (strain 053442), this protein is ATP synthase subunit delta.